The sequence spans 611 residues: Creatine transporter (611 aa).

The helical transmembrane segment at 45-65 (FIMSCVGFAVGLGNVWRFPYL) threads the bilayer. At 66 to 71 (CYKNGG) the chain is on the extracellular side. A helical membrane pass occupies residues 72–92 (GVFLIPYLLVAVFGGIPIFFL). The Cytoplasmic segment spans residues 93–122 (EISLGQFMKAGGINAWNIAPLFKGLGYASM). Residues 123–143 (VIVFFCNTYYILVLTWSSFYL) form a helical membrane-spanning segment. At 144 to 207 (VQSFSSPLPW…LSSGLGDVGE (64 aa)) the chain is on the extracellular side. Asn157 and Asn171 each carry an N-linked (GlcNAc...) asparagine glycan. Residues 208–228 (IGWELTLCLTATWMLVYFCIW) form a helical membrane-spanning segment. At 229–246 (KGVKTSGKVVYVTATFPY) the chain is on the cytoplasmic side. The helical transmembrane segment at 247–267 (IILVILLVRGVTLHGAVQGIV) threads the bilayer. Residues 268–281 (YYLQPDWGKLGEAQ) lie on the Extracellular side of the membrane. A helical membrane pass occupies residues 282 to 302 (VWIDAGTQIFFSYAIGLGTLT). Topologically, residues 303-318 (ALGSYNQLHNDCYKDA) are cytoplasmic. Residues 319–339 (FILSLVNSATSFFAGLVVFSI) form a helical membrane-spanning segment. At 340 to 371 (LGFMAVEEGVDISVVAESGPGLAFIAYPKAVT) the chain is on the extracellular side. Residues 372–392 (LMPFPQVWAVLFFIMLLCLGL) traverse the membrane as a helical segment. Residues 393–421 (GSQFVGVEGFVTAILDLWPSKFSFRYLRE) lie on the Cytoplasmic side of the membrane. The chain crosses the membrane as a helical span at residues 422–442 (VVVAMVICLSFLIDLSMITEG). At 443 to 456 (GMYIFQIFDYYSAS) the chain is on the extracellular side. A helical transmembrane segment spans residues 457-477 (GTTLLWTAFWECVAVAWVYGG). Residues 478-497 (DRYLDDLAWMLGYRPWALVK) lie on the Cytoplasmic side of the membrane. The helical transmembrane segment at 498-518 (WCWSVITPLVCMGIFTFHLVN) threads the bilayer. At 519–537 (YKPLTYNKTYTYPWWGEAI) the chain is on the extracellular side. Asn525 carries N-linked (GlcNAc...) asparagine glycosylation. Residues 538–558 (GWCLALASMLCVPTTVLYSLS) traverse the membrane as a helical segment. Over 559–611 (RGRGSLKERWRKLTTPVWASHHLAYKMAGAKINQPCEGVVSCEEKVVIFESVL) the chain is Cytoplasmic.

Belongs to the sodium:neurotransmitter symporter (SNF) (TC 2.A.22) family.

It is found in the membrane. Functionally, required for the uptake of creatine. This chain is Creatine transporter, found in Torpedo marmorata (Marbled electric ray).